Here is a 70-residue protein sequence, read N- to C-terminus: Neuropeptide SIFamide (70 aa).

A signal peptide spans 1-22 (MRFIVALCLFAIVMCIIHKAEG). Phenylalanine 34 is subject to Phenylalanine amide. Residues 38-70 (GVVEYDTTGRALSALCEIASETCQAWYQTLENK) constitute a propeptide that is removed on maturation.

Expressed in antennal lobe (AL) and gnathal ganglion (GNG) with expression detected in most animals (at protein level). Not expressed in corpora cardiaca (CC) and corpora allata (CA) (at protein level).

It localises to the secreted. Its function is as follows. Ligand for the neuropeptide SIFamide receptor. The sequence is that of Neuropeptide SIFamide from Agrotis ipsilon (Black cutworm moth).